Reading from the N-terminus, the 226-residue chain is ATP synthase F(0) complex subunit a (226 aa).

6 helical membrane passes run 12-32, 68-88, 97-117, 138-158, 164-184, and 200-222; these read PTIL…LLIP, WSLM…LGLL, QLSM…ATGF, IPML…ALAV, ITAG…LSTI, and TTLE…SLYL.

Belongs to the ATPase A chain family. In terms of assembly, component of the ATP synthase complex composed at least of ATP5F1A/subunit alpha, ATP5F1B/subunit beta, ATP5MC1/subunit c (homooctomer), MT-ATP6/subunit a, MT-ATP8/subunit 8, ATP5ME/subunit e, ATP5MF/subunit f, ATP5MG/subunit g, ATP5MK/subunit k, ATP5MJ/subunit j, ATP5F1C/subunit gamma, ATP5F1D/subunit delta, ATP5F1E/subunit epsilon, ATP5PF/subunit F6, ATP5PB/subunit b, ATP5PD/subunit d, ATP5PO/subunit OSCP. ATP synthase complex consists of a soluble F(1) head domain (subunits alpha(3) and beta(3)) - the catalytic core - and a membrane F(0) domain - the membrane proton channel (subunits c, a, 8, e, f, g, k and j). These two domains are linked by a central stalk (subunits gamma, delta, and epsilon) rotating inside the F1 region and a stationary peripheral stalk (subunits F6, b, d, and OSCP). Interacts with DNAJC30; interaction is direct.

It is found in the mitochondrion inner membrane. It carries out the reaction H(+)(in) = H(+)(out). Its function is as follows. Subunit a, of the mitochondrial membrane ATP synthase complex (F(1)F(0) ATP synthase or Complex V) that produces ATP from ADP in the presence of a proton gradient across the membrane which is generated by electron transport complexes of the respiratory chain. ATP synthase complex consist of a soluble F(1) head domain - the catalytic core - and a membrane F(1) domain - the membrane proton channel. These two domains are linked by a central stalk rotating inside the F(1) region and a stationary peripheral stalk. During catalysis, ATP synthesis in the catalytic domain of F(1) is coupled via a rotary mechanism of the central stalk subunits to proton translocation. With the subunit c (ATP5MC1), forms the proton-conducting channel in the F(0) domain, that contains two crucial half-channels (inlet and outlet) that facilitate proton movement from the mitochondrial intermembrane space (IMS) into the matrix. Protons are taken up via the inlet half-channel and released through the outlet half-channel, following a Grotthuss mechanism. The chain is ATP synthase F(0) complex subunit a from Hylobates lar (Lar gibbon).